A 338-amino-acid chain; its full sequence is Lipoate-protein ligase A (338 aa).

Residues 29–216 enclose the BPL/LPL catalytic domain; that stretch reads PATQRVLFLW…AFFAHYGERV (188 aa). Residues arginine 71, 76–79, and lysine 134 each bind ATP; that span reads GAVF. Lysine 134 is a (R)-lipoate binding site.

This sequence belongs to the LplA family. In terms of assembly, monomer.

The protein localises to the cytoplasm. It carries out the reaction L-lysyl-[lipoyl-carrier protein] + (R)-lipoate + ATP = N(6)-[(R)-lipoyl]-L-lysyl-[lipoyl-carrier protein] + AMP + diphosphate + H(+). It participates in protein modification; protein lipoylation via exogenous pathway; protein N(6)-(lipoyl)lysine from lipoate: step 1/2. The protein operates within protein modification; protein lipoylation via exogenous pathway; protein N(6)-(lipoyl)lysine from lipoate: step 2/2. In terms of biological role, catalyzes both the ATP-dependent activation of exogenously supplied lipoate to lipoyl-AMP and the transfer of the activated lipoyl onto the lipoyl domains of lipoate-dependent enzymes. The sequence is that of Lipoate-protein ligase A from Escherichia coli O6:H1 (strain CFT073 / ATCC 700928 / UPEC).